The following is a 1481-amino-acid chain: MEGAKGPRLRGFLSGSLATWALGLAGLVGEAEESAGGTEEEEEEEEEEGALCTEKRFLRLIDGALLLRVLGIIAPSSRGGLRMVRGRDGPAACRMWNLCHLWGRLRDFYQEELQLLILSPPPDLQTMGCDPFSEEAVDELESILRLLLGASVQCEHRELFIRHIRGLSLDVQSELAGAIQEVTQPGAGVVLALAGPESGELVAEELEMQLRSLTGMMSRLARERDLGAQRLAELLLEREPAHLLLPEAPANASAEGVSHHLALQLTNAKAQLRRLRQEVEEKAEQLLDSQAEVQGLEAEIRRLRQETQALSAQAKRAELYREEAEALRERAGRLPRLQEELRRCREKLQAAEVFKGQLEEERVLSEALEASKVLLEEQLEVARERSARLHETQRENLLLRTRLGEAHADLDSLRHQLEQLVEENVELELELQRSLEPPPGSPGEASLPGAAPSLQDEVREAEAGRLRAVERENRELRGQLQMLQAQLGSQHPLLEEQRENSRQPPVPNRDPATPSALHHSPQSPACQIGGEGSESLDLPSPASYSDITRSPKCSQAPDSHPELESPLQMVSQDPQTSDQALQESDPTVETHQCLEKSGHRVPLQSPIVWDPPQGPEVRIEVQELLGETGSREAPQGELVHKAQVLKQESPKCRPRSAELTLREPLKDQKALDRELELSKQQKETGRHEQRPKGLESKLGPQKPQQTSEGVPDAWSREEPTPGETLVSAIPEEQALRDEVAQLRREVAGLEVKLQAQAQRLEARSAEALCLSEELAQARRTEAEAHQEAEAQAREQARLREAVDTASLELEAASREREALAEALAAAGRERRQWERDGPRLRAQVEAAEQQVQALESQVRCHLEEAEREHAEKQALREELEKAVLRGQELGDRLEHLQEELEQAALERQKFLQEQENQHQRYRHLEQRLEAELQAASTSKEEALMELKARALQLEEELIQLRQYPVDLATGARAGPRTVETQNGRLIEVERNNATLVAEKAALQGQLQHLEGQLGSLQGRAQELLLQSQRAQEHSSRLQAEKSMMEMQGQELHRKLGVLEEEVRAARRAQEETRGQQQALLRDHEALVQLQRRQETELEGLLVRHRDLKANMRALELAHRELQGRHEQLQAQRANVEAQEVALLAERERLMQDGHRQRGLEEELRRLQNEHERAQMLLAEVSRERGELQGERGELRSRLARLELERAQLEIQSQQLRESNQQLDLSACRLTTQCELLTQLRSAQEEENRQLLAEVQALSRENRELLERSLESRDHLHREQREYLDQLNALRREKQKLVEKIMDQYRVLEPGPLPRTKKGSWLADKVKRLIRPRREGALHGGPRLGADGAGSTESLGGPLETELPEGREADGTGSSSPAPMRRVQSSLCLGDETLAGGQRRRLSSRFPGGRSSASFSPGDTPRQRFRQRRPGPLGAPSTHSKGSGVEWDGSIKTLSEHEADDTREAFQEQKPEKQFLTPSLSQ.

Coiled-coil stretches lie at residues 200–225 (ELVAEELEMQLRSLTGMMSRLARERD) and 258–491 (SHHL…GSQH). Disordered stretches follow at residues 430 to 458 (ELQRSLEPPPGSPGEASLPGAAPSLQDEV), 494 to 731 (LEEQ…AIPE), and 1331 to 1481 (PRRE…SLSQ). At serine 441 the chain carries Phosphoserine. 2 stretches are compositionally biased toward polar residues: residues 542–557 (ASYSDITRSPKCSQAP) and 568–590 (QMVSQDPQTSDQALQESDPTVET). The residue at position 649 (serine 649) is a Phosphoserine. Residues 660-695 (TLREPLKDQKALDRELELSKQQKETGRHEQRPKGLE) show a composition bias toward basic and acidic residues. Positions 731–1308 (EEQALRDEVA…KIMDQYRVLE (578 aa)) form a coiled coil. Residues serine 1353 and serine 1384 each carry the phosphoserine modification. Polar residues predominate over residues 1371 to 1386 (TGSSSPAPMRRVQSSL). Over residues 1453–1472 (LSEHEADDTREAFQEQKPEK) the composition is skewed to basic and acidic residues.

It belongs to the CCDC88 family. Homodimer. Interacts with DOCK8. Interacts (via C-terminus) with intact microtubules. Interacts with dynein-dynactin motor complex. Interacts (via C-terminus) with HSPA5. As to expression, abundantly expressed in immune cells, including both CD4(+) and CD8(+) T-cells and in myeloid cells (at protein level). Expressed in endothelium (at protein level). Expressed specifically in spleen, bone marrow, lymph nodes and thymus. Expressed in liver and heart.

It is found in the membrane. The protein localises to the cytoplasm. The protein resides in the cytoskeleton. It localises to the microtubule organizing center. Its subcellular location is the endoplasmic reticulum. It is found in the golgi apparatus. In terms of biological role, acts as a positive regulator of T-cell maturation and inflammatory function. Required for several functions of T-cells in both the CD4(+) and the CD8(+) compartments and this includes expression of cell surface markers of activation, proliferation, and cytokine production in response to specific or non-specific stimulation and during the course of infection with the mouse malaria parasite Plasmodium berghei. Enhances NK cell cytotoxicity by positively regulating polarization of microtubule-organizing center (MTOC) to cytotoxic synapse, lytic granule transport along microtubules, and dynein-mediated clustering to MTOC. Interacts with HSPA5 and stabilizes the interaction between HSPA5 and ERN1, leading to suppression of ERN1-induced JNK activation and endoplasmic reticulum stress-induced apoptosis. In Mus musculus (Mouse), this protein is Coiled-coil domain-containing protein 88B (Ccdc88b).